A 231-amino-acid polypeptide reads, in one-letter code: Ribosomal RNA small subunit methyltransferase G (231 aa).

S-adenosyl-L-methionine is bound by residues glycine 85, phenylalanine 90, and arginine 154.

It belongs to the methyltransferase superfamily. RNA methyltransferase RsmG family.

It is found in the cytoplasm. It catalyses the reaction guanosine(527) in 16S rRNA + S-adenosyl-L-methionine = N(7)-methylguanosine(527) in 16S rRNA + S-adenosyl-L-homocysteine. Its function is as follows. Specifically methylates the N7 position of guanine in position 527 of 16S rRNA. The sequence is that of Ribosomal RNA small subunit methyltransferase G from Rhodopseudomonas palustris (strain BisA53).